The sequence spans 203 residues: ATP-dependent Clp protease proteolytic subunit (203 aa).

Residue serine 107 is the Nucleophile of the active site. The active site involves histidine 132.

This sequence belongs to the peptidase S14 family. As to quaternary structure, fourteen ClpP subunits assemble into 2 heptameric rings which stack back to back to give a disk-like structure with a central cavity, resembling the structure of eukaryotic proteasomes.

It localises to the cytoplasm. It carries out the reaction Hydrolysis of proteins to small peptides in the presence of ATP and magnesium. alpha-casein is the usual test substrate. In the absence of ATP, only oligopeptides shorter than five residues are hydrolyzed (such as succinyl-Leu-Tyr-|-NHMec, and Leu-Tyr-Leu-|-Tyr-Trp, in which cleavage of the -Tyr-|-Leu- and -Tyr-|-Trp bonds also occurs).. In terms of biological role, cleaves peptides in various proteins in a process that requires ATP hydrolysis. Has a chymotrypsin-like activity. Plays a major role in the degradation of misfolded proteins. This chain is ATP-dependent Clp protease proteolytic subunit, found in Shewanella woodyi (strain ATCC 51908 / MS32).